The following is a 390-amino-acid chain: Delta-aminolevulinic acid dehydratase, chloroplastic (390 aa).

Residues 1–24 (MQMMQRNVVGQRPVAGSRRSLVVA) constitute a chloroplast transit peptide. Residues 34 to 69 (VSTNGKHRTGVPEGTPIVTPQDLPSRPRRNRRSESF) are disordered. Lysine 251 functions as the Schiff-base intermediate with substrate in the catalytic mechanism. 5-aminolevulinate contacts are provided by arginine 261 and lysine 281. Position 297 (glutamate 297) interacts with Mg(2+). Lysine 312 functions as the Schiff-base intermediate with substrate in the catalytic mechanism. Residues serine 338 and tyrosine 377 each coordinate 5-aminolevulinate.

The protein belongs to the ALAD family. In terms of assembly, homooctamer. The cofactor is Mg(2+).

The protein resides in the plastid. It localises to the chloroplast. The enzyme catalyses 2 5-aminolevulinate = porphobilinogen + 2 H2O + H(+). It participates in porphyrin-containing compound metabolism; protoporphyrin-IX biosynthesis; coproporphyrinogen-III from 5-aminolevulinate: step 1/4. In terms of biological role, catalyzes an early step in the biosynthesis of tetrapyrroles. Binds two molecules of 5-aminolevulinate per subunit, each at a distinct site, and catalyzes their condensation to form porphobilinogen. In Chlamydomonas reinhardtii (Chlamydomonas smithii), this protein is Delta-aminolevulinic acid dehydratase, chloroplastic (HEMB).